Consider the following 101-residue polypeptide: Small ribosomal subunit protein uS10 (101 aa).

Belongs to the universal ribosomal protein uS10 family. Part of the 30S ribosomal subunit.

Its function is as follows. Involved in the binding of tRNA to the ribosomes. The protein is Small ribosomal subunit protein uS10 of Ureaplasma parvum serovar 3 (strain ATCC 27815 / 27 / NCTC 11736).